The sequence spans 169 residues: Shikimate kinase (169 aa).

13–18 (GAGKST) provides a ligand contact to ATP. A Mg(2+)-binding site is contributed by Ser-17. The substrate site is built by Asp-35, Arg-59, and Gly-80. An ATP-binding site is contributed by Arg-117. Residue Arg-136 participates in substrate binding. Arg-153 is a binding site for ATP.

It belongs to the shikimate kinase family. Monomer. The cofactor is Mg(2+).

The protein resides in the cytoplasm. It catalyses the reaction shikimate + ATP = 3-phosphoshikimate + ADP + H(+). It functions in the pathway metabolic intermediate biosynthesis; chorismate biosynthesis; chorismate from D-erythrose 4-phosphate and phosphoenolpyruvate: step 5/7. In terms of biological role, catalyzes the specific phosphorylation of the 3-hydroxyl group of shikimic acid using ATP as a cosubstrate. The polypeptide is Shikimate kinase (Corynebacterium glutamicum (strain ATCC 13032 / DSM 20300 / JCM 1318 / BCRC 11384 / CCUG 27702 / LMG 3730 / NBRC 12168 / NCIMB 10025 / NRRL B-2784 / 534)).